The following is a 353-amino-acid chain: Photosystem II protein D1 (353 aa).

Thr2 carries the post-translational modification N-acetylthreonine. The residue at position 2 (Thr2) is a Phosphothreonine. Transmembrane regions (helical) follow at residues 29–46 (YIGW…TATS), 118–133 (HFLL…EWEL), and 142–156 (WIAV…AATA). His118 provides a ligand contact to chlorophyll a. Residue Tyr126 coordinates pheophytin a. Positions 170 and 189 each coordinate [CaMn4O5] cluster. Residues 197–218 (FHMLGVAGVFGSSLFSAMHGSL) form a helical membrane-spanning segment. His198 serves as a coordination point for chlorophyll a. A quinone-binding positions include His215 and 264–265 (SF). His215 provides a ligand contact to Fe cation. His272 provides a ligand contact to Fe cation. Residues 274 to 288 (FLAAWPVVGIWFTAL) form a helical membrane-spanning segment. The [CaMn4O5] cluster site is built by His332, Glu333, Asp342, and Ala344. Positions 345–353 (AMEAPSVNG) are excised as a propeptide.

The protein belongs to the reaction center PufL/M/PsbA/D family. In terms of assembly, PSII is composed of 1 copy each of membrane proteins PsbA, PsbB, PsbC, PsbD, PsbE, PsbF, PsbH, PsbI, PsbJ, PsbK, PsbL, PsbM, PsbT, PsbX, PsbY, PsbZ, Psb30/Ycf12, at least 3 peripheral proteins of the oxygen-evolving complex and a large number of cofactors. It forms dimeric complexes. It depends on The D1/D2 heterodimer binds P680, chlorophylls that are the primary electron donor of PSII, and subsequent electron acceptors. It shares a non-heme iron and each subunit binds pheophytin, quinone, additional chlorophylls, carotenoids and lipids. D1 provides most of the ligands for the Mn4-Ca-O5 cluster of the oxygen-evolving complex (OEC). There is also a Cl(-1) ion associated with D1 and D2, which is required for oxygen evolution. The PSII complex binds additional chlorophylls, carotenoids and specific lipids. as a cofactor. In terms of processing, tyr-161 forms a radical intermediate that is referred to as redox-active TyrZ, YZ or Y-Z. C-terminally processed by CTPA; processing is essential to allow assembly of the oxygen-evolving complex and thus photosynthetic growth.

It is found in the plastid. The protein resides in the chloroplast thylakoid membrane. It catalyses the reaction 2 a plastoquinone + 4 hnu + 2 H2O = 2 a plastoquinol + O2. Photosystem II (PSII) is a light-driven water:plastoquinone oxidoreductase that uses light energy to abstract electrons from H(2)O, generating O(2) and a proton gradient subsequently used for ATP formation. It consists of a core antenna complex that captures photons, and an electron transfer chain that converts photonic excitation into a charge separation. The D1/D2 (PsbA/PsbD) reaction center heterodimer binds P680, the primary electron donor of PSII as well as several subsequent electron acceptors. This chain is Photosystem II protein D1, found in Vigna unguiculata (Cowpea).